A 460-amino-acid chain; its full sequence is Endoglucanase 2 (460 aa).

The N-terminal stretch at 1 to 32 (MIKGSSLKRIKSLVMMAIFSVSIITTAIVSSA) is a signal peptide. Glu99 serves as the catalytic Proton donor. Asp155 acts as the Nucleophile in catalysis. The 61-residue stretch at 400–460 (QQGLKGDVNN…FAQLKVKLLN (61 aa)) folds into the Dockerin domain.

The protein belongs to the glycosyl hydrolase 8 (cellulase D) family.

It catalyses the reaction Endohydrolysis of (1-&gt;4)-beta-D-glucosidic linkages in cellulose, lichenin and cereal beta-D-glucans.. The polypeptide is Endoglucanase 2 (celB) (Ruminiclostridium josui (Clostridium josui)).